A 333-amino-acid polypeptide reads, in one-letter code: NADH-quinone oxidoreductase subunit H (333 aa).

The next 8 membrane-spanning stretches (helical) occupy residues 15–35 (LVIF…FVTY), 88–108 (FILA…TLPF), 117–137 (IGVG…GVVA), 159–179 (ISYE…TGSL), 191–211 (VWYI…AVAE), 250–270 (LFAM…PVMF), 273–293 (FIPG…VLIW), and 313–333 (VLFP…ELFF).

The protein belongs to the complex I subunit 1 family. As to quaternary structure, NDH-1 is composed of 14 different subunits. Subunits NuoA, H, J, K, L, M, N constitute the membrane sector of the complex.

Its subcellular location is the cell membrane. It carries out the reaction a quinone + NADH + 5 H(+)(in) = a quinol + NAD(+) + 4 H(+)(out). Its function is as follows. NDH-1 shuttles electrons from NADH, via FMN and iron-sulfur (Fe-S) centers, to quinones in the respiratory chain. The immediate electron acceptor for the enzyme in this species is believed to be ubiquinone. Couples the redox reaction to proton translocation (for every two electrons transferred, four hydrogen ions are translocated across the cytoplasmic membrane), and thus conserves the redox energy in a proton gradient. This subunit may bind ubiquinone. This Geobacillus sp. (strain WCH70) protein is NADH-quinone oxidoreductase subunit H.